Here is a 314-residue protein sequence, read N- to C-terminus: Putative S-adenosyl-L-methionine-dependent methyltransferase MMAR_5323 (314 aa).

S-adenosyl-L-methionine-binding positions include Asp-132 and 161 to 162 (DL).

Belongs to the UPF0677 family.

Its function is as follows. Exhibits S-adenosyl-L-methionine-dependent methyltransferase activity. This is Putative S-adenosyl-L-methionine-dependent methyltransferase MMAR_5323 from Mycobacterium marinum (strain ATCC BAA-535 / M).